A 115-amino-acid chain; its full sequence is Cobalt-zinc-cadmium resistance protein CzcI (115 aa).

Positions 1 to 20 (MRRFVLIFVLLILPFQFSWA) are cleaved as a signal peptide. Positions 93-102 (QHSSEFSSLN) are enriched in polar residues. Residues 93–115 (QHSSEFSSLNARAPDRPQWQRLA) are disordered.

The protein resides in the periplasm. Its function is as follows. Component of the czc cation-efflux system that confers resistance to cobalt, zinc and cadmium. May have a regulatory function. This is Cobalt-zinc-cadmium resistance protein CzcI (czcI) from Cupriavidus metallidurans (strain ATCC 43123 / DSM 2839 / NBRC 102507 / CH34) (Ralstonia metallidurans).